The following is a 360-amino-acid chain: Proline-rich protein 11 (360 aa).

Disordered stretches follow at residues 20–43 (KKKEASHFQSKLITPPPPPPSPER) and 174–201 (PPTLPQPASHFPPPPPPPPLPPPPPPLA). Residue Thr-33 is modified to Phosphothreonine. Ser-40 is modified (phosphoserine). The segment covering 175 to 201 (PTLPQPASHFPPPPPPPPLPPPPPPLA) has biased composition (pro residues). Residues 285–291 (LITPGKS) carry the Phosphodegron motif. Residue Thr-287 is modified to Phosphothreonine. Phosphoserine is present on Ser-291. A D-box motif is present at residues 296–304 (RKLLRKVDV). Positions 316-318 (KEN) match the KEN box motif. The Phosphodegron motif lies at 325-330 (LTPVMT). Residues 340–360 (AHPRSPTPTLPLSTSSFDEQN) form a disordered region. Ser-344 is modified (phosphoserine). Residues Thr-346 and Thr-348 each carry the phosphothreonine modification. The span at 349–360 (LPLSTSSFDEQN) shows a compositional bias: low complexity.

In terms of processing, ubiquitinated. Rapidly degraded by the proteasome; degradation may involve FBXW7-specific phosphorylated phosphodegron motifs. As to expression, ubiquitously expressed.

It localises to the cytoplasm. The protein localises to the nucleus. Functionally, plays a critical role in cell cycle progression. The polypeptide is Proline-rich protein 11 (PRR11) (Homo sapiens (Human)).